A 151-amino-acid chain; its full sequence is Putative transcriptional regulatory protein TK2151 (151 aa).

Belongs to the Tfx family.

Functionally, putative transcriptional regulator. The sequence is that of Putative transcriptional regulatory protein TK2151 from Thermococcus kodakarensis (strain ATCC BAA-918 / JCM 12380 / KOD1) (Pyrococcus kodakaraensis (strain KOD1)).